The following is a 189-amino-acid chain: Endoribonuclease YbeY (189 aa).

His146, His150, and His156 together coordinate Zn(2+).

It belongs to the endoribonuclease YbeY family. Zn(2+) serves as cofactor.

It localises to the cytoplasm. Its function is as follows. Single strand-specific metallo-endoribonuclease involved in late-stage 70S ribosome quality control and in maturation of the 3' terminus of the 16S rRNA. This Prochlorococcus marinus (strain MIT 9211) protein is Endoribonuclease YbeY.